Reading from the N-terminus, the 506-residue chain is Maturase K (506 aa).

This sequence belongs to the intron maturase 2 family. MatK subfamily.

It localises to the plastid. It is found in the chloroplast. Its function is as follows. Usually encoded in the trnK tRNA gene intron. Probably assists in splicing its own and other chloroplast group II introns. This Trifolium hirtum (Rose clover) protein is Maturase K.